The primary structure comprises 234 residues: Structural PPIase-like protein L605 (234 aa).

The 188-residue stretch at 18–205 (YMDIVLNNEI…PTFSIGKCGA (188 aa)) folds into the PPIase cyclophilin-type domain.

This sequence belongs to the cyclophilin-type PPIase family. Homotrimer.

The protein resides in the virion. It localises to the host cytoplasm. This chain is Structural PPIase-like protein L605, found in Acanthamoeba polyphaga mimivirus (APMV).